Consider the following 305-residue polypeptide: tRNA dimethylallyltransferase (305 aa).

9-16 lines the ATP pocket; it reads GPTASGKS. 11–16 contributes to the substrate binding site; sequence TASGKS. Residues 34–37 form an interaction with substrate tRNA region; it reads DSKQ.

Belongs to the IPP transferase family. In terms of assembly, monomer. Mg(2+) is required as a cofactor.

The enzyme catalyses adenosine(37) in tRNA + dimethylallyl diphosphate = N(6)-dimethylallyladenosine(37) in tRNA + diphosphate. Its function is as follows. Catalyzes the transfer of a dimethylallyl group onto the adenine at position 37 in tRNAs that read codons beginning with uridine, leading to the formation of N6-(dimethylallyl)adenosine (i(6)A). The chain is tRNA dimethylallyltransferase from Anaplasma marginale (strain Florida).